The sequence spans 25 residues: uncharacterized protein (25 aa).

This is an uncharacterized protein from Escherichia coli (Bacteriophage T3).